A 240-amino-acid chain; its full sequence is Cilia- and flagella-associated protein 77 (240 aa).

It belongs to the CFAP77 family.

Its subcellular location is the cytoplasm. The protein localises to the cytoskeleton. It is found in the cilium axoneme. It localises to the flagellum axoneme. Its function is as follows. Microtubule inner protein (MIP) part of the dynein-decorated doublet microtubules (DMTs) in cilia axoneme, which is required for motile cilia beating. The chain is Cilia- and flagella-associated protein 77 from Danio rerio (Zebrafish).